Consider the following 192-residue polypeptide: Imidazoleglycerol-phosphate dehydratase (192 aa).

The protein belongs to the imidazoleglycerol-phosphate dehydratase family.

It localises to the cytoplasm. It carries out the reaction D-erythro-1-(imidazol-4-yl)glycerol 3-phosphate = 3-(imidazol-4-yl)-2-oxopropyl phosphate + H2O. Its pathway is amino-acid biosynthesis; L-histidine biosynthesis; L-histidine from 5-phospho-alpha-D-ribose 1-diphosphate: step 6/9. This Caldivirga maquilingensis (strain ATCC 700844 / DSM 13496 / JCM 10307 / IC-167) protein is Imidazoleglycerol-phosphate dehydratase.